A 631-amino-acid polypeptide reads, in one-letter code: Origin recognition complex subunit 1 (631 aa).

Composition is skewed to low complexity over residues 1 to 14 and 22 to 37; these read MTDE…YPPI and KLNN…NNNH. Residues 1 to 164 form a disordered region; sequence MTDESSSSIS…EEEDEEGKFN (164 aa). Over residues 55 to 80 the composition is skewed to basic and acidic residues; the sequence is DNEKIGFSDPENEKINKHKASFKDSN. The segment covering 91 to 104 has biased composition (acidic residues); that stretch reads EDTDDDDYEDEDED. The segment covering 105–133 has biased composition (basic and acidic residues); that stretch reads ENHKIKDESDNSEDFNNHTKNTTDLDEGF. Residues 141–160 are compositionally biased toward acidic residues; the sequence is ESEEEEEEEEYEEEEEEDEE. ATP is bound by residues Val-230 and 265–273; that span reads GMPGTGKTA. Mg(2+)-binding residues include Asp-361 and Glu-362. Residues Glu-362, Asn-395, and Arg-460 each contribute to the ATP site.

It belongs to the ORC1 family. ORC is composed of six subunits.

Its subcellular location is the nucleus. Its function is as follows. Component of the origin recognition complex (ORC) that binds origins of replication. DNA-binding is ATP-dependent, however specific DNA sequences that define origins of replication have not been identified so far. ORC is required to assemble the pre-replication complex necessary to initiate DNA replication. This chain is Origin recognition complex subunit 1 (orcA), found in Dictyostelium discoideum (Social amoeba).